The following is a 944-amino-acid chain: MGPKTLPQLAGKWQVLCMLSLCCWGWVSGQLRYSVVEESEPGTLVGNVAQDLGLKMTDLLSRRLQLGSEENGRYFSLSLMSGALAVNQKIDRESLCGASTSCLLPVQVVTEHPLELIRVEVEILDLNDNSPSFATPEREMRISESAASGARFPLDSAQDPDVGTNTVSFYTLSPNSHFSLNVKTLKDGKPFPELVLEQQLDREAQARHQLVLTAVDGGTPARSGTTLISVIVLDINDNAPTFQSSVLRVGIPENAPIGTLLLRLNATDPDEGTNGQLDYSFGDHTSEAVRNLFGLDPSSGAIHVLGPIDFEESRFYEIHARARDQGQPAMEGHCVIQVEVGDVNDNAPEVLLASLANPVLESTPVGTVVGLFNVRDRDSGRNGEVSLDISPDLPFQIKPSENHYSLLTSQPLDREATSHYIIELLASDAGSPSLHKHLTIRLNISDVNDNAPRFNQQLYTAYILENRPPGSLLCTVAASDPDTGDNARLTYSVVGNQVQGAPASSFVYVNPEDGRVFAQRTFDYELLQMLQIVVGVRDSGSPPLHANTSLHVFVLDENDNAPAVLHPRPGWEHSAPQRLPRSAPPGSLVTKVTAVDADAGHNAWLSYSLLPQSTAPGLFLVSTHTGEVRTARALLEDDSDTQQVVVLVRDNGDPSLSSTATVLLVLEDEDPEEMPKSSDFLIHPPERSDLTLYLIVALATVSLLSLVTFTFLSAKCLQGNADGDGGGGQCCRRQDSPSPDFYKQSSPNLQVSSDGTLKYMEVTLRPTDSQSHCYRTCFSPASDGSDFTFLRPLSVQQPTALALEPDAIRSRSNTLRERSQQAPPNTDWRFSQAQRPGTSGSQNGDDTGTWPNNQFDTEMLQAMILASASEAADGSSTLGGGAGTMGLSARYGPQFTLQHVPDYRQNVYIPGSNATLTNAAGKRDGKAPAGGNGNKKKSGKKEKK.

The signal sequence occupies residues 1 to 29 (MGPKTLPQLAGKWQVLCMLSLCCWGWVSG). 6 consecutive Cadherin domains span residues 30–133 (QLRY…SPSF), 134–242 (ATPE…APTF), 243–350 (QSSV…APEV), 351–454 (LLAS…APRF), 455–564 (NQQL…APAV), and 571–677 (WEHS…MPKS). Topologically, residues 30–693 (QLRYSVVEES…PPERSDLTLY (664 aa)) are extracellular. N265, N443, and N547 each carry an N-linked (GlcNAc...) asparagine glycan. A helical membrane pass occupies residues 694 to 714 (LIVALATVSLLSLVTFTFLSA). Over 715–944 (KCLQGNADGD…KKKSGKKEKK (230 aa)) the chain is Cytoplasmic. Disordered stretches follow at residues 722-747 (DGDG…QSSP), 812-853 (SNTL…WPNN), and 914-944 (ATLT…KEKK). Polar residues predominate over residues 820-853 (QQAPPNTDWRFSQAQRPGTSGSQNGDDTGTWPNN). Residues 934-944 (NKKKSGKKEKK) are compositionally biased toward basic residues.

It localises to the cell membrane. In terms of biological role, potential calcium-dependent cell-adhesion protein. May be involved in the establishment and maintenance of specific neuronal connections in the brain. The sequence is that of Protocadherin gamma-C5 (PCDHGC5) from Pan troglodytes (Chimpanzee).